Consider the following 412-residue polypeptide: AA9 family lytic polysaccharide monooxygenase A (412 aa).

Residues 1–20 (MKTTTYSLLALAAASKLASA) form the signal peptide. Cu(2+) contacts are provided by histidine 21 and histidine 103. The cysteines at positions 63 and 186 are disulfide-linked. An N-linked (GlcNAc...) asparagine glycan is attached at asparagine 151. An O2-binding site is contributed by histidine 172. Tyrosine 183 contacts Cu(2+). Asparagine 334 and asparagine 385 each carry an N-linked (GlcNAc...) asparagine glycan. The 37-residue stretch at 373–409 (GVAKMYERCGGINHTGPTTCESGSVCKKWNPYYYQCV) folds into the CBM1 domain.

Belongs to the polysaccharide monooxygenase AA9 family. Requires Cu(2+) as cofactor.

It is found in the secreted. It carries out the reaction [(1-&gt;4)-beta-D-glucosyl]n+m + reduced acceptor + O2 = 4-dehydro-beta-D-glucosyl-[(1-&gt;4)-beta-D-glucosyl]n-1 + [(1-&gt;4)-beta-D-glucosyl]m + acceptor + H2O.. In terms of biological role, lytic polysaccharide monooxygenase (LPMO) that depolymerizes crystalline and amorphous polysaccharides via the oxidation of scissile alpha- or beta-(1-4)-glycosidic bonds, yielding C4 oxidation products. Catalysis by LPMOs requires the reduction of the active-site copper from Cu(II) to Cu(I) by a reducing agent and H(2)O(2) or O(2) as a cosubstrate. This Aspergillus niger (strain ATCC MYA-4892 / CBS 513.88 / FGSC A1513) protein is AA9 family lytic polysaccharide monooxygenase A (eglD).